We begin with the raw amino-acid sequence, 501 residues long: Cilia- and flagella-associated protein 45 (501 aa).

Positions 75–114 (MTAEDVAAAKREAEAKREQLQAVSKARKEKMLKLEEEAKK) form a coiled coil.

Belongs to the CFAP45 family.

Its subcellular location is the cell projection. It is found in the cilium. The protein localises to the flagellum. This chain is Cilia- and flagella-associated protein 45, found in Chlamydomonas reinhardtii (Chlamydomonas smithii).